Reading from the N-terminus, the 163-residue chain is Nucleotide-binding protein BA_1166 (163 aa).

This sequence belongs to the YajQ family.

In terms of biological role, nucleotide-binding protein. This chain is Nucleotide-binding protein BA_1166, found in Bacillus anthracis.